The following is a 291-amino-acid chain: Serine hydrolase BPHL (291 aa).

Residues 1–37 form the signal peptide; that stretch reads MATATVRPAAQRLRLLLSPLKSRICVPQAEPVATFGT. The AB hydrolase-1 domain maps to 62-173; that stretch reads AILLLPGMLG…ANAYVTEEDS (112 aa). Lys-74 is modified (N6-acetyllysine; alternate). N6-succinyllysine; alternate is present on Lys-74. Residues Lys-86 and Lys-119 each carry the N6-acetyllysine modification. Lys-126 bears the N6-acetyllysine; alternate mark. Lys-126 carries the post-translational modification N6-succinyllysine; alternate. The active-site Nucleophile is Ser-139. An N6-succinyllysine modification is found at Lys-184. Lys-191 is subject to N6-acetyllysine; alternate. N6-succinyllysine; alternate is present on Lys-191. Residue Lys-217 is modified to N6-acetyllysine. Glu-221 contacts Mg(2+). Position 243 is an N6-acetyllysine (Lys-243). The active-site Charge relay system is Asp-244. Residues Lys-260 and Lys-271 each carry the N6-acetyllysine; alternate modification. N6-succinyllysine; alternate is present on residues Lys-260 and Lys-271. The active-site Charge relay system is His-272.

Belongs to the AB hydrolase superfamily. Lipase family. In terms of assembly, monomer. May also form homodimers.

It is found in the mitochondrion. It catalyses the reaction L-homocysteine thiolactone + H2O = L-homocysteine + H(+). The catalysed reaction is valacyclovir + H2O = acyclovir + L-valine + H(+). Its function is as follows. Specific alpha-amino acid ester serine hydrolase that prefers small, hydrophobic, and aromatic side chains and does not have a stringent requirement for the leaving group other than preferring a primary alcohol. Has homocysteine-thiolactonase activity (in vitro) and may play a significant role in the detoxification of homocysteine thiolactone in vivo. Catalyzes the hydrolytic activation of amino acid ester prodrugs of nucleoside analogs such as valacyclovir and valganciclovir, converting them into their active forms (acyclovir and ganciclovir). The sequence is that of Serine hydrolase BPHL (Bphl) from Mus musculus (Mouse).